An 85-amino-acid polypeptide reads, in one-letter code: Small ribosomal subunit protein uS17 (85 aa).

The protein belongs to the universal ribosomal protein uS17 family. Part of the 30S ribosomal subunit.

In terms of biological role, one of the primary rRNA binding proteins, it binds specifically to the 5'-end of 16S ribosomal RNA. This Spiroplasma citri protein is Small ribosomal subunit protein uS17.